The primary structure comprises 517 residues: GMP synthase [glutamine-hydrolyzing] (517 aa).

The region spanning 9 to 199 (RILILDFGSQ…VLGVCGCERL (191 aa)) is the Glutamine amidotransferase type-1 domain. The Nucleophile role is filled by cysteine 86. Residues histidine 173 and glutamate 175 contribute to the active site. A GMPS ATP-PPase domain is found at 200–392 (WTSESIIEDA…LGLPYNMLYR (193 aa)). 227 to 233 (SGGVDSS) provides a ligand contact to ATP.

In terms of assembly, homodimer.

The enzyme catalyses XMP + L-glutamine + ATP + H2O = GMP + L-glutamate + AMP + diphosphate + 2 H(+). The protein operates within purine metabolism; GMP biosynthesis; GMP from XMP (L-Gln route): step 1/1. Its function is as follows. Catalyzes the synthesis of GMP from XMP. This Vibrio parahaemolyticus serotype O3:K6 (strain RIMD 2210633) protein is GMP synthase [glutamine-hydrolyzing].